We begin with the raw amino-acid sequence, 330 residues long: Aspartate--ammonia ligase (330 aa).

Belongs to the class-II aminoacyl-tRNA synthetase family. AsnA subfamily.

The protein resides in the cytoplasm. The catalysed reaction is L-aspartate + NH4(+) + ATP = L-asparagine + AMP + diphosphate + H(+). It participates in amino-acid biosynthesis; L-asparagine biosynthesis; L-asparagine from L-aspartate (ammonia route): step 1/1. This Haemophilus influenzae (strain ATCC 51907 / DSM 11121 / KW20 / Rd) protein is Aspartate--ammonia ligase.